Reading from the N-terminus, the 498-residue chain is Glycerol kinase (498 aa).

Threonine 12 provides a ligand contact to ADP. Threonine 12, threonine 13, and serine 14 together coordinate ATP. Threonine 12 lines the sn-glycerol 3-phosphate pocket. Residue arginine 16 participates in ADP binding. Residues arginine 82, glutamate 83, and tyrosine 134 each coordinate sn-glycerol 3-phosphate. Glycerol contacts are provided by arginine 82, glutamate 83, and tyrosine 134. Histidine 230 is subject to Phosphohistidine; by HPr. Aspartate 244 serves as a coordination point for sn-glycerol 3-phosphate. The glycerol site is built by aspartate 244 and glutamine 245. Positions 266 and 309 each coordinate ADP. Residues threonine 266, glycine 309, glutamine 313, and glycine 410 each coordinate ATP. Residues glycine 410 and asparagine 414 each contribute to the ADP site.

It belongs to the FGGY kinase family. As to quaternary structure, homotetramer and homodimer (in equilibrium). The phosphoenolpyruvate-dependent sugar phosphotransferase system (PTS), including enzyme I, and histidine-containing protein (HPr) are required for the phosphorylation, which leads to the activation of the enzyme.

It catalyses the reaction glycerol + ATP = sn-glycerol 3-phosphate + ADP + H(+). It participates in polyol metabolism; glycerol degradation via glycerol kinase pathway; sn-glycerol 3-phosphate from glycerol: step 1/1. With respect to regulation, activated by phosphorylation and inhibited by fructose 1,6-bisphosphate (FBP). In terms of biological role, key enzyme in the regulation of glycerol uptake and metabolism. Catalyzes the phosphorylation of glycerol to yield sn-glycerol 3-phosphate. The sequence is that of Glycerol kinase from Staphylococcus aureus (strain bovine RF122 / ET3-1).